Here is an 894-residue protein sequence, read N- to C-terminus: Cell wall-associated protease (894 aa).

The N-terminal stretch at 1–31 (MKRRKFSSVVAAVLIFALIFSLFSPGTKAAA) is a signal peptide. The 308-residue stretch at 422 to 729 (QWPLKNNGEN…YGRLNVMKAV (308 aa)) folds into the Peptidase S8 domain. Active-site charge relay system residues include Asp-462, His-497, and Ser-650.

It belongs to the peptidase S8 family. Proteolytically cleaved to yield CWBP23 and CWBP52.

The protein localises to the secreted. Its subcellular location is the cell wall. With respect to regulation, inhibited by PMSF. CWBP52 is a serine-type protease that could be involved in proteoglycan peptide bridges. The sequence is that of Cell wall-associated protease (wprA) from Bacillus subtilis (strain 168).